The chain runs to 334 residues: uncharacterized protein (334 aa).

This sequence belongs to the MG414/MG415 family.

This is an uncharacterized protein from Mycoplasma pneumoniae (strain ATCC 29342 / M129 / Subtype 1) (Mycoplasmoides pneumoniae).